We begin with the raw amino-acid sequence, 43 residues long: Thymosin beta-b (43 aa).

2 stretches are compositionally biased toward basic and acidic residues: residues Met1–Glu25 and Glu33–Ala43. The interval Met1–Ala43 is disordered.

Belongs to the thymosin beta family.

It localises to the cytoplasm. The protein localises to the cytoskeleton. Plays an important role in the organization of the cytoskeleton. Binds to and sequesters actin monomers (G actin) and therefore inhibits actin polymerization. The protein is Thymosin beta-b of Cyprinus carpio (Common carp).